We begin with the raw amino-acid sequence, 289 residues long: Shikimate dehydrogenase (NADP(+)) (289 aa).

Residues 19-21 (SMS) and T66 contribute to the shikimate site. Residue K70 is the Proton acceptor of the active site. Residues N91 and D106 each coordinate shikimate. NADP(+) contacts are provided by residues 131–135 (GAGGA), 155–160 (NRTLKK), and L229. Position 231 (Y231) interacts with shikimate. Residue G252 coordinates NADP(+).

Belongs to the shikimate dehydrogenase family. In terms of assembly, homodimer.

The enzyme catalyses shikimate + NADP(+) = 3-dehydroshikimate + NADPH + H(+). It functions in the pathway metabolic intermediate biosynthesis; chorismate biosynthesis; chorismate from D-erythrose 4-phosphate and phosphoenolpyruvate: step 4/7. In terms of biological role, involved in the biosynthesis of the chorismate, which leads to the biosynthesis of aromatic amino acids. Catalyzes the reversible NADPH linked reduction of 3-dehydroshikimate (DHSA) to yield shikimate (SA). This chain is Shikimate dehydrogenase (NADP(+)), found in Halothermothrix orenii (strain H 168 / OCM 544 / DSM 9562).